A 1070-amino-acid polypeptide reads, in one-letter code: DNA-directed RNA polymerase subunit beta (1070 aa).

This sequence belongs to the RNA polymerase beta chain family. In terms of assembly, in plastids the minimal PEP RNA polymerase catalytic core is composed of four subunits: alpha, beta, beta', and beta''. When a (nuclear-encoded) sigma factor is associated with the core the holoenzyme is formed, which can initiate transcription.

It localises to the plastid. It is found in the chloroplast. It catalyses the reaction RNA(n) + a ribonucleoside 5'-triphosphate = RNA(n+1) + diphosphate. In terms of biological role, DNA-dependent RNA polymerase catalyzes the transcription of DNA into RNA using the four ribonucleoside triphosphates as substrates. The chain is DNA-directed RNA polymerase subunit beta from Piper cenocladum (Ant piper).